A 276-amino-acid polypeptide reads, in one-letter code: Urease accessory protein UreD (276 aa).

This sequence belongs to the UreD family. In terms of assembly, ureD, UreF and UreG form a complex that acts as a GTP-hydrolysis-dependent molecular chaperone, activating the urease apoprotein by helping to assemble the nickel containing metallocenter of UreC. The UreE protein probably delivers the nickel.

It localises to the cytoplasm. Functionally, required for maturation of urease via the functional incorporation of the urease nickel metallocenter. This Bradyrhizobium diazoefficiens (strain JCM 10833 / BCRC 13528 / IAM 13628 / NBRC 14792 / USDA 110) protein is Urease accessory protein UreD.